Reading from the N-terminus, the 118-residue chain is Large ribosomal subunit protein bL19 (118 aa).

The protein belongs to the bacterial ribosomal protein bL19 family.

Functionally, this protein is located at the 30S-50S ribosomal subunit interface and may play a role in the structure and function of the aminoacyl-tRNA binding site. The protein is Large ribosomal subunit protein bL19 of Geotalea daltonii (strain DSM 22248 / JCM 15807 / FRC-32) (Geobacter daltonii).